The chain runs to 101 residues: Replication restart protein PriB (101 aa).

The region spanning 1–101 (MATNHLVLSG…LHAENVELKT (101 aa)) is the SSB domain.

Belongs to the PriB family. Homodimer. Interacts with PriA and DnaT. Component of the replication restart primosome. Primosome assembly occurs via a 'hand-off' mechanism. PriA binds to replication forks, subsequently PriB then DnaT bind; DnaT then displaces ssDNA to generate the helicase loading substrate.

Involved in the restart of stalled replication forks, which reloads the replicative helicase on sites other than the origin of replication; the PriA-PriB pathway is the major replication restart pathway. During primosome assembly it facilitates complex formation between PriA and DnaT on DNA; stabilizes PriA on DNA. Stimulates the DNA unwinding activity of PriA helicase. The protein is Replication restart protein PriB of Shewanella woodyi (strain ATCC 51908 / MS32).